Consider the following 100-residue polypeptide: Small ribosomal subunit protein uS14c (100 aa).

This sequence belongs to the universal ribosomal protein uS14 family. As to quaternary structure, part of the 30S ribosomal subunit.

It is found in the plastid. The protein resides in the chloroplast. In terms of biological role, binds 16S rRNA, required for the assembly of 30S particles. This chain is Small ribosomal subunit protein uS14c, found in Emiliania huxleyi (Coccolithophore).